The primary structure comprises 700 residues: Elongation factor G (700 aa).

In terms of domain architecture, tr-type G spans 10-286 (NKVRNIGIMA…AVIDYLPNPL (277 aa)). Residues 19–26 (AHIDAGKT), 83–87 (DTPGH), and 137–140 (NKMD) contribute to the GTP site.

It belongs to the TRAFAC class translation factor GTPase superfamily. Classic translation factor GTPase family. EF-G/EF-2 subfamily.

It is found in the cytoplasm. Its function is as follows. Catalyzes the GTP-dependent ribosomal translocation step during translation elongation. During this step, the ribosome changes from the pre-translocational (PRE) to the post-translocational (POST) state as the newly formed A-site-bound peptidyl-tRNA and P-site-bound deacylated tRNA move to the P and E sites, respectively. Catalyzes the coordinated movement of the two tRNA molecules, the mRNA and conformational changes in the ribosome. This is Elongation factor G from Rhodococcus erythropolis (strain PR4 / NBRC 100887).